The sequence spans 1023 residues: Transmembrane protein 132A (1023 aa).

Residues 1 to 35 form the signal peptide; sequence MCARMAGRTTAAPRGPYGPWLCLLVALALDVVRVD. Residues 36 to 852 lie on the Extracellular side of the membrane; that stretch reads CGQAPLDPVY…VTELELGMYA (817 aa). The tract at residues 212–246 is disordered; that stretch reads AAEGPGGCGSGEENDPGEQALPVGGVELRPADPPQ. Residue Asn280 is glycosylated (N-linked (GlcNAc...) asparagine). 2 disordered regions span residues 512 to 533 and 766 to 839; these read WRVP…DEAE and LPPA…MVPA. A compositionally biased stretch (low complexity) spans 515–527; it reads PGPAEGPAEPAAE. Ser529 carries the phosphoserine; by FAM20C modification. The segment at 611–916 is binds to HSPA5/GRP78; the sequence is IEVRSPLSDS…RQLDRQSPGP (306 aa). The confers cellular localization similar to full-length form stretch occupies residues 671 to 1023; the sequence is LPAPKQEVAL…NYMERIRGSS (353 aa). A compositionally biased stretch (low complexity) spans 778-790; the sequence is SSPAWSPPATEAT. The span at 809–823 shows a compositional bias: basic and acidic residues; the sequence is GKFERAEEEARKEET. The segment covering 824 to 836 has biased composition (acidic residues); it reads EAREEEEEEEEEM. A helical transmembrane segment spans residues 853-873; it reads LLGVFCVAIFIFLVNGVVFVL. Over 874–1023 the chain is Cytoplasmic; the sequence is RYQRKEPPDS…NYMERIRGSS (150 aa). Positions 905-961 are disordered; that stretch reads LSRQLDRQSPGPPKGEGSCPCESGGGGEAPTLAPGPPGGTTSSSSTLARKEAGGRRK.

The protein belongs to the TMEM132 family. In terms of assembly, interacts with HSPA5/GRP78.

The protein localises to the golgi apparatus membrane. It is found in the endoplasmic reticulum membrane. Functionally, may play a role in embryonic and postnatal development of the brain. Increased resistance to cell death induced by serum starvation in cultured cells. Regulates cAMP-induced GFAP gene expression via STAT3 phosphorylation. The polypeptide is Transmembrane protein 132A (TMEM132A) (Homo sapiens (Human)).